A 384-amino-acid polypeptide reads, in one-letter code: MTKPIITFNNVSKTFEDSGTQVLKNINFDLEEGKFYTLLGASGSGKSTILNIMAGLLDASSGDIYLDGERINDLPINKRDIHTVFQNYALFPHMTVFENVAFALKLKKVDKKEIAKRVKETLKMVQLEGYENRSIQKLSGGQRQRVAIARAIINQPRVVLLDEPLSALDLKLRTEMQYELRELQQRLGITFVFVTHDQEEALAMSDWIFVMNEGEIVQSGTPVDIYDEPINHFVANFIGESNIINGTMIEDYLVSFNGKEFESVDGGMRPNEPVEVVIRPEDLQITLPEEGKLQVKVDTQLFRGVHYEIIAYDELGNEWMIHSTRKAIEGEVIGLDFTPEDLHIMRLNETEEEFDARIEEYVEMDEPEDGLINAIEEERNEENL.

Residues isoleucine 6 to isoleucine 238 enclose the ABC transporter domain. An ATP-binding site is contributed by glycine 40 to serine 47.

It belongs to the ABC transporter superfamily. Spermidine/putrescine importer (TC 3.A.1.11.1) family. In terms of assembly, the complex is composed of two ATP-binding proteins (PotA), two transmembrane proteins (PotB and PotC) and a solute-binding protein (PotD).

Its subcellular location is the cell membrane. The catalysed reaction is ATP + H2O + polyamine-[polyamine-binding protein]Side 1 = ADP + phosphate + polyamineSide 2 + [polyamine-binding protein]Side 1.. Part of the ABC transporter complex PotABCD involved in spermidine/putrescine import. Responsible for energy coupling to the transport system. The protein is Spermidine/putrescine import ATP-binding protein PotA of Streptococcus pyogenes serotype M12 (strain MGAS2096).